The sequence spans 300 residues: Estradiol 17-beta-dehydrogenase 11 (300 aa).

The signal sequence occupies residues 1–19 (MKFLLDILLLLPLLIVCSL). Residue 40 to 64 (LITGAGHGIGRLTAYEFAKLKSKLV) coordinates NADP(+). Substrate is bound at residue serine 172. Tyrosine 185 functions as the Proton acceptor in the catalytic mechanism.

This sequence belongs to the short-chain dehydrogenases/reductases (SDR) family. 17-beta-HSD 3 subfamily. In terms of tissue distribution, present at high level in steroidogenic cells such as syncytiotrophoblasts, sebaceous gland, Leydig cells, and granulosa cells of the dominant follicle and corpus luteum. In lung, it is detected in the ciliated epithelium and in acini of adult trachea, in bronchioles, but not in alveoli. In the eye, it is detected in the nonpigmented epithelium of the ciliary body and, at lower level, in the inner nuclear layer of the retina (at protein level). Widely expressed. Highly expressed in retina, pancreas, kidney, liver, lung, adrenal, small intestine, ovary and heart.

The protein resides in the endoplasmic reticulum. Its subcellular location is the lipid droplet. It catalyses the reaction 17beta-estradiol + NAD(+) = estrone + NADH + H(+). The enzyme catalyses 17beta-estradiol + NADP(+) = estrone + NADPH + H(+). Its function is as follows. Can convert androstan-3-alpha,17-beta-diol (3-alpha-diol) to androsterone in vitro, suggesting that it may participate in androgen metabolism during steroidogenesis. May act by metabolizing compounds that stimulate steroid synthesis and/or by generating metabolites that inhibit it. Has no activity toward DHEA (dehydroepiandrosterone), or A-dione (4-androste-3,17-dione), and only a slight activity toward testosterone to A-dione. Tumor-associated antigen in cutaneous T-cell lymphoma. This Homo sapiens (Human) protein is Estradiol 17-beta-dehydrogenase 11 (HSD17B11).